The following is a 260-amino-acid chain: Cytochrome c oxidase subunit 3 (260 aa).

6 helical membrane passes run 41–61 (LTLV…RDII), 81–101 (GMIL…WAFF), 133–153 (TGVL…ILAG), 161–181 (ALFL…WEYI), 196–216 (FFVA…FLMV), and 238–258 (AWYW…IYWW).

This sequence belongs to the cytochrome c oxidase subunit 3 family. In terms of assembly, component of the cytochrome c oxidase (complex IV, CIV), a multisubunit enzyme composed of a catalytic core of 3 subunits and several supernumerary subunits. The complex exists as a monomer or a dimer and forms supercomplexes (SCs) in the inner mitochondrial membrane with ubiquinol-cytochrome c oxidoreductase (cytochrome b-c1 complex, complex III, CIII).

Its subcellular location is the mitochondrion inner membrane. It catalyses the reaction 4 Fe(II)-[cytochrome c] + O2 + 8 H(+)(in) = 4 Fe(III)-[cytochrome c] + 2 H2O + 4 H(+)(out). Functionally, component of the cytochrome c oxidase, the last enzyme in the mitochondrial electron transport chain which drives oxidative phosphorylation. The respiratory chain contains 3 multisubunit complexes succinate dehydrogenase (complex II, CII), ubiquinol-cytochrome c oxidoreductase (cytochrome b-c1 complex, complex III, CIII) and cytochrome c oxidase (complex IV, CIV), that cooperate to transfer electrons derived from NADH and succinate to molecular oxygen, creating an electrochemical gradient over the inner membrane that drives transmembrane transport and the ATP synthase. Cytochrome c oxidase is the component of the respiratory chain that catalyzes the reduction of oxygen to water. Electrons originating from reduced cytochrome c in the intermembrane space (IMS) are transferred via the dinuclear copper A center (CU(A)) of subunit 2 and heme A of subunit 1 to the active site in subunit 1, a binuclear center (BNC) formed by heme A3 and copper B (CU(B)). The BNC reduces molecular oxygen to 2 water molecules using 4 electrons from cytochrome c in the IMS and 4 protons from the mitochondrial matrix. The sequence is that of Cytochrome c oxidase subunit 3 (COIII) from Strongylocentrotus purpuratus (Purple sea urchin).